The primary structure comprises 158 residues: NAD(P)H-quinone oxidoreductase subunit J, chloroplastic (158 aa).

It belongs to the complex I 30 kDa subunit family. In terms of assembly, NDH is composed of at least 16 different subunits, 5 of which are encoded in the nucleus.

The protein localises to the plastid. The protein resides in the chloroplast thylakoid membrane. It carries out the reaction a plastoquinone + NADH + (n+1) H(+)(in) = a plastoquinol + NAD(+) + n H(+)(out). The catalysed reaction is a plastoquinone + NADPH + (n+1) H(+)(in) = a plastoquinol + NADP(+) + n H(+)(out). NDH shuttles electrons from NAD(P)H:plastoquinone, via FMN and iron-sulfur (Fe-S) centers, to quinones in the photosynthetic chain and possibly in a chloroplast respiratory chain. The immediate electron acceptor for the enzyme in this species is believed to be plastoquinone. Couples the redox reaction to proton translocation, and thus conserves the redox energy in a proton gradient. The chain is NAD(P)H-quinone oxidoreductase subunit J, chloroplastic from Amborella trichopoda.